The chain runs to 281 residues: Shikimate dehydrogenase (NADP(+)) (281 aa).

Shikimate contacts are provided by residues 15–17 and Thr-62; that span reads SKS. Lys-66 acts as the Proton acceptor in catalysis. The shikimate site is built by Asn-87 and Asp-102. Residues 127 to 131, 151 to 156, and Leu-217 contribute to the NADP(+) site; these read GAGGS and NRTPER. Position 219 (Tyr-219) interacts with shikimate. Gly-241 contributes to the NADP(+) binding site.

The protein belongs to the shikimate dehydrogenase family. As to quaternary structure, homodimer.

The enzyme catalyses shikimate + NADP(+) = 3-dehydroshikimate + NADPH + H(+). It functions in the pathway metabolic intermediate biosynthesis; chorismate biosynthesis; chorismate from D-erythrose 4-phosphate and phosphoenolpyruvate: step 4/7. Involved in the biosynthesis of the chorismate, which leads to the biosynthesis of aromatic amino acids. Catalyzes the reversible NADPH linked reduction of 3-dehydroshikimate (DHSA) to yield shikimate (SA). This Stenotrophomonas maltophilia (strain R551-3) protein is Shikimate dehydrogenase (NADP(+)).